Consider the following 301-residue polypeptide: 4-hydroxy-tetrahydrodipicolinate synthase (301 aa).

Threonine 46 is a pyruvate binding site. The active-site Proton donor/acceptor is the tyrosine 134. The Schiff-base intermediate with substrate role is filled by lysine 162. Pyruvate is bound at residue isoleucine 203.

Belongs to the DapA family. In terms of assembly, homotetramer; dimer of dimers.

The protein localises to the cytoplasm. It carries out the reaction L-aspartate 4-semialdehyde + pyruvate = (2S,4S)-4-hydroxy-2,3,4,5-tetrahydrodipicolinate + H2O + H(+). It functions in the pathway amino-acid biosynthesis; L-lysine biosynthesis via DAP pathway; (S)-tetrahydrodipicolinate from L-aspartate: step 3/4. Its function is as follows. Catalyzes the condensation of (S)-aspartate-beta-semialdehyde [(S)-ASA] and pyruvate to 4-hydroxy-tetrahydrodipicolinate (HTPA). The chain is 4-hydroxy-tetrahydrodipicolinate synthase from Anaplasma marginale (strain Florida).